Consider the following 547-residue polypeptide: Chaperonin GroEL (547 aa).

ATP-binding positions include 30–33 (TLGP), Lys51, 87–91 (DGTTT), Gly415, 479–481 (NAA), and Asp495.

It belongs to the chaperonin (HSP60) family. In terms of assembly, forms a cylinder of 14 subunits composed of two heptameric rings stacked back-to-back. Interacts with the co-chaperonin GroES.

The protein resides in the cytoplasm. The enzyme catalyses ATP + H2O + a folded polypeptide = ADP + phosphate + an unfolded polypeptide.. In terms of biological role, together with its co-chaperonin GroES, plays an essential role in assisting protein folding. The GroEL-GroES system forms a nano-cage that allows encapsulation of the non-native substrate proteins and provides a physical environment optimized to promote and accelerate protein folding. The polypeptide is Chaperonin GroEL (Cupriavidus metallidurans (strain ATCC 43123 / DSM 2839 / NBRC 102507 / CH34) (Ralstonia metallidurans)).